We begin with the raw amino-acid sequence, 504 residues long: MSKEDNVINNFEEQANELMKERFQKLKELQSNGKDPFDVYKVERTHTSKEVKDNYEDLEGKTVTVAGRLMSKRVHGKAGFSDIHDRYGKIQLYIKINDVGEEKLKEYKTFDIGDIISVTGTVFKTKTGETSIHITDFQLVCKSLRPLPEKWHGLKDPDLRYRQRYVDLIINQDVRDTFIKRTAIIKSMREFLDNRGFLEVETPILSPIAGGAAAKPFITHHNALDIDMYLRIATELYLKRLIVGGFEKVYEIGKNFRNEGIDIRHNPEFTAIELYEAYADYNDMMEITENMIAYICEKVLGTTKVEYEGAEIDFTPPWRRLTMVDAVKEYAGVDFNIIKDDIEARAIAKEKHIEFKKELKDCTKGDVLIGLFEEFCEDKLMQPTFICDYPVENSPLTKKKRGNEAFTERFEGFVFGREVCNAYSELNDSIVQKERFMQQLKERELGDDEAYMMDDDFITSLEVGMPPTGGLGIGIDRLIMFLTDTHSIRDVILFPTMKPQPNNQ.

Positions 411 and 418 each coordinate Mg(2+).

It belongs to the class-II aminoacyl-tRNA synthetase family. As to quaternary structure, homodimer. Requires Mg(2+) as cofactor.

Its subcellular location is the cytoplasm. It catalyses the reaction tRNA(Lys) + L-lysine + ATP = L-lysyl-tRNA(Lys) + AMP + diphosphate. In Clostridium botulinum (strain Loch Maree / Type A3), this protein is Lysine--tRNA ligase.